Here is a 183-residue protein sequence, read N- to C-terminus: Capsid protein (183 aa).

The interval 136 to 183 (NAPILSTLPETTVVRRRGRSPRRRTPSPRRRRSQSPRRRRSQSRESQC) is disordered. The span at 149–176 (VRRRGRSPRRRTPSPRRRRSQSPRRRRS) shows a compositional bias: basic residues. A phosphoserine; by host mark is found at S155, S162, and S170. The stretch at 155–161 (SPRRRTP) is one 1; half-length repeat. Positions 155-177 (SPRRRTPSPRRRRSQSPRRRRSQ) are 3 X 8 AA repeats of S-P-R-R-R-[PR]-S-Q. A Bipartite nuclear localization signal motif is present at residues 158–175 (RRTPSPRRRRSQSPRRRR). Repeat copies occupy residues 162-169 (SPRRRRSQ) and 170-177 (SPRRRRSQ). The tract at residues 177-183 (QSRESQC) is RNA binding.

The protein belongs to the orthohepadnavirus core antigen family. As to quaternary structure, homodimerizes, then multimerizes. Interacts with cytosol exposed regions of viral L glycoprotein present in the reticulum-to-Golgi compartment. Interacts with human FLNB. Phosphorylated form interacts with host importin alpha; this interaction depends on the exposure of the NLS, which itself depends upon genome maturation and/or phosphorylation of the capsid protein. Interacts with host NUP153. Phosphorylated by host SRPK1, SRPK2, and maybe protein kinase C or GAPDH. Phosphorylation is critical for pregenomic RNA packaging. Protein kinase C phosphorylation is stimulated by HBx protein and may play a role in transport of the viral genome to the nucleus at the late step during the viral replication cycle.

It localises to the virion. The protein resides in the host cytoplasm. Self assembles to form an icosahedral capsid. Most capsids appear to be large particles with an icosahedral symmetry of T=4 and consist of 240 copies of capsid protein, though a fraction forms smaller T=3 particles consisting of 180 capsid proteins. Entering capsids are transported along microtubules to the nucleus. Phosphorylation of the capsid is thought to induce exposure of nuclear localization signal in the C-terminal portion of the capsid protein that allows binding to the nuclear pore complex via the importin (karyopherin-) alpha and beta. Capsids are imported in intact form through the nuclear pore into the nuclear basket, where it probably binds NUP153. Only capsids that contain the mature viral genome can release the viral DNA and capsid protein into the nucleoplasm. Immature capsids get stuck in the basket. Capsids encapsulate the pre-genomic RNA and the P protein. Pre-genomic RNA is reverse-transcribed into DNA while the capsid is still in the cytoplasm. The capsid can then either be directed to the nucleus, providing more genomes for transcription, or bud through the endoplasmic reticulum to provide new virions. In Homo sapiens (Human), this protein is Capsid protein.